The following is a 319-amino-acid chain: Protein quaking-B (319 aa).

The 67-residue stretch at tyrosine 87–valine 153 folds into the KH domain. Positions proline 276–proline 279 match the SH3-binding motif.

It belongs to the quaking family. In terms of assembly, homodimer; does not require RNA to homodimerize.

It localises to the cytoplasm. The protein resides in the nucleus. RNA reader protein, which recognizes and binds specific RNAs, thereby regulating RNA metabolic processes, such as pre-mRNA splicing, circular RNA (circRNA) formation, mRNA export, mRNA stability and/or translation. Involved in various cellular processes, such as mRNA storage into stress granules, apoptosis, interferon response, glial cell fate and development. Binds to the 5'-NACUAAY-N(1,20)-UAAY-3' RNA core sequence. Acts as a mRNA modification reader that specifically recognizes and binds mRNA transcripts modified by internal N(7)-methylguanine (m7G). Promotes the formation of circular RNAs (circRNAs): acts by binding to sites flanking circRNA-forming exons. CircRNAs are produced by back-splicing circularization of pre-mRNAs. Required to protect and promote stability of mRNAs which promotes oligodendrocyte differentiation. Acts as an important regulator of muscle development: required during early skeletal myofibril formation by regulating the accumulation of the muscle-specific tropomyosin-3 (tpm3) transcripts. This Danio rerio (Zebrafish) protein is Protein quaking-B (qki2).